Here is a 229-residue protein sequence, read N- to C-terminus: MAHAGGTGYDNREIVMKYIHYKLSQRGYEWDAGDAGAAPPGAAPAPGILSSQPGRTPAPSRTSPPPPPAAAAGPAPSPVPPVVHLTLRQAGDDFSRRYRRDFAEMSSQLHLTPFTARERFATVVEELFRDGVNWGRIVAFFEFGGVMCVESVNREMSPLVDSIALWMTEYLNRHLHTWIQDNGGWDAFVELYGPSMRPLFDFSWLSLKALLSLALVGACITLGAYLGHK.

The BH4 signature appears at 10–30 (DNREIVMKYIHYKLSQRGYEW). The segment at 30–82 (WDAGDAGAAPPGAAPAPGILSSQPGRTPAPSRTSPPPPPAAAAGPAPSPVPPV) is disordered. The span at 33 to 61 (GDAGAAPPGAAPAPGILSSQPGRTPAPSR) shows a compositional bias: low complexity. Thr62 is modified (phosphothreonine; by MAPK8). The span at 62 to 81 (TSPPPPPAAAAGPAPSPVPP) shows a compositional bias: pro residues. Ser63 is subject to Phosphoserine; by MAPK8 and PKC. Ser77 carries the phosphoserine; by MAPK8 modification. Residues 83 to 97 (VHLTLRQAGDDFSRR) carry the BH3 motif. The BH1 signature appears at 126–145 (ELFRDGVNWGRIVAFFEFGG). Positions 177-192 (TWIQDNGGWDAFVELY) match the BH2 motif. The chain crosses the membrane as a helical span at residues 202–223 (FSWLSLKALLSLALVGACITLG).

This sequence belongs to the Bcl-2 family. As to quaternary structure, forms homodimers, and heterodimers with BAX, BAD, BAK and Bcl-X(L). Heterodimerization with BAX requires intact BH1 and BH2 motifs, and is necessary for anti-apoptotic activity. Component of the complex, at least composed of LRPPRC, BECN1 and BCL2; the interactions prevent BECN1 from forming an autophagy-inducing complex with PIK3C3. Interacts with EI24. Also interacts with APAF1, BBC3, BCL2L1, BNIPL, MRPL41 and TP53BP2. Binding to FKBP8 seems to target BCL2 to the mitochondria and probably interferes with the binding of BCL2 to its targets. Interacts with BAG1 in an ATP-dependent manner. Interacts with RAF1 (the 'Ser-338' and 'Ser-339' phosphorylated form). Interacts (via the BH4 domain) with EGLN3; the interaction prevents the formation of the BAX-BCL2 complex and inhibits the anti-apoptotic activity of BCL2. Interacts with G0S2; this interaction also prevents the formation of the anti-apoptotic BAX-BCL2 complex. Interacts with RTL10/BOP. Interacts with the SCF(FBXO10) complex. Interacts (via the loop between motifs BH4 and BH3) with NLRP1 (via LRR repeats), but not with NLRP2, NLRP3, NLRP4, PYCARD, nor MEFV. Interacts with GIMAP3/IAN4, GIMAP4/IAN1 and GIMAP5/IAN5. Interacts with BCAP31. Interacts with IRF3; the interaction is inhibited by Sendai virus infection. Interacts with BECN1; thereby inhibiting autophagy in non-starvation conditions. Interacts with AMBRA1; thereby inhibiting autophagy. Phosphorylation/dephosphorylation on Ser-63 regulates anti-apoptotic activity. Growth factor-stimulated phosphorylation on Ser-63 by PKC is required for the anti-apoptosis activity and occurs during the G2/M phase of the cell cycle. In the absence of growth factors, BCL2 appears to be phosphorylated by other protein kinases such as ERKs and stress-activated kinases. Phosphorylated by MAPK8/JNK1 at Thr-62, Ser-63 and Ser-77, which stimulates starvation-induced autophagy. Dephosphorylated by protein phosphatase 2A (PP2A). Post-translationally, proteolytically cleaved by caspases during apoptosis. The cleaved protein, lacking the BH4 motif, has pro-apoptotic activity, causes the release of cytochrome c into the cytosol promoting further caspase activity. In terms of processing, monoubiquitinated by PRKN, leading to an increase in its stability. Ubiquitinated by SCF(FBXO10), leading to its degradation by the proteasome.

The protein localises to the mitochondrion outer membrane. It is found in the nucleus membrane. The protein resides in the endoplasmic reticulum membrane. It localises to the cytoplasm. In terms of biological role, suppresses apoptosis in a variety of cell systems including factor-dependent lymphohematopoietic and neural cells. Regulates cell death by controlling the mitochondrial membrane permeability. Appears to function in a feedback loop system with caspases. Inhibits caspase activity either by preventing the release of cytochrome c from the mitochondria and/or by binding to the apoptosis-activating factor (APAF-1). Also acts as an inhibitor of autophagy: interacts with BECN1 and AMBRA1 during non-starvation conditions and inhibits their autophagy function. May attenuate inflammation by impairing NLRP1-inflammasome activation, hence CASP1 activation and IL1B release. This chain is Apoptosis regulator Bcl-2 (BCL2), found in Bos taurus (Bovine).